The following is a 117-amino-acid chain: Small ribosomal subunit protein uS12c (117 aa).

Positions 9–40 (RNARQPIENRKKSPALRGCPQRRGTITPKKPN) are disordered.

Belongs to the universal ribosomal protein uS12 family. In terms of assembly, part of the 30S ribosomal subunit.

The protein resides in the plastid. It is found in the chloroplast. Functionally, with S4 and S5 plays an important role in translational accuracy. Located at the interface of the 30S and 50S subunits. The protein is Small ribosomal subunit protein uS12c (rps12) of Pinus koraiensis (Korean pine).